The primary structure comprises 562 residues: Teichoic acid ribitol-phosphate polymerase TarL (562 aa).

This sequence belongs to the CDP-glycerol glycerophosphotransferase family.

It is found in the cell membrane. The catalysed reaction is 4-O-[di(2R)-glycerylphospho]-N-acetyl-beta-D-mannosaminyl-(1-&gt;4)-N-acetyl-alpha-D-glucosaminyl di-trans,octa-cis-undecaprenyl diphosphate + n CDP-L-ribitol = 4-O-[(D-ribitylphospho)(n)-di{(2R)-glycerylphospho}]-N-acetyl-beta-D-mannosaminyl-(1-&gt;4)-N-acetyl-alpha-D-glucosaminyl di-trans,octa-cis-undecaprenyl diphosphate + n CMP + n H(+). The protein operates within cell wall biogenesis; poly(ribitol phosphate) teichoic acid biosynthesis. Functionally, responsible for the polymerization of the main chain of the major teichoic acid by sequential transfer of ribitol phosphate units from CDP-ribitol to the second glycerol phosphate attached to the disaccharide linkage unit. Synthesizes polymers of more than 40 ribitol phosphate units in length. The chain is Teichoic acid ribitol-phosphate polymerase TarL (tarL) from Staphylococcus aureus (strain NCTC 8325 / PS 47).